We begin with the raw amino-acid sequence, 177 residues long: Large ribosomal subunit protein uL6 (177 aa).

Belongs to the universal ribosomal protein uL6 family. Part of the 50S ribosomal subunit.

Its function is as follows. This protein binds to the 23S rRNA, and is important in its secondary structure. It is located near the subunit interface in the base of the L7/L12 stalk, and near the tRNA binding site of the peptidyltransferase center. The protein is Large ribosomal subunit protein uL6 of Saccharophagus degradans (strain 2-40 / ATCC 43961 / DSM 17024).